Reading from the N-terminus, the 878-residue chain is NUT family member 2B (878 aa).

Disordered stretches follow at residues 273–324 (WSQG…DDSC), 417–512 (QKSQ…PEEI), 527–560 (LLGPSLGATGEPEKQREEGKVKQPQEEDWTPPDP), 624–693 (PPLK…GMAR), 709–757 (LRAA…EEEE), and 775–878 (WLPQ…HCSQ). Pro residues-rich tracts occupy residues 278-288 (PLPPPPPPAAQ) and 427-444 (CLPPPATPRLEPRGPPAP). Over residues 476-487 (TKARRPPPRPHR) the composition is skewed to basic residues. Basic and acidic residues predominate over residues 537 to 551 (EPEKQREEGKVKQPQ).

The protein belongs to the NUT family.

This is NUT family member 2B (NUTM2B) from Homo sapiens (Human).